We begin with the raw amino-acid sequence, 217 residues long: Small ribosomal subunit protein uS3c (217 aa).

One can recognise a KH type-2 domain in the interval 47 to 119 (VRTHIKSSSN…KLHIAIEKVA (73 aa)).

The protein belongs to the universal ribosomal protein uS3 family. As to quaternary structure, part of the 30S ribosomal subunit.

The protein localises to the plastid. Its subcellular location is the chloroplast. The polypeptide is Small ribosomal subunit protein uS3c (rps3) (Pinus thunbergii (Japanese black pine)).